We begin with the raw amino-acid sequence, 429 residues long: Glutamate-1-semialdehyde 2,1-aminomutase 2 (429 aa).

The residue at position 268 (K268) is an N6-(pyridoxal phosphate)lysine.

The protein belongs to the class-III pyridoxal-phosphate-dependent aminotransferase family. HemL subfamily. In terms of assembly, homodimer. Pyridoxal 5'-phosphate is required as a cofactor.

It localises to the cytoplasm. The enzyme catalyses (S)-4-amino-5-oxopentanoate = 5-aminolevulinate. It participates in porphyrin-containing compound metabolism; protoporphyrin-IX biosynthesis; 5-aminolevulinate from L-glutamyl-tRNA(Glu): step 2/2. In Geobacillus kaustophilus (strain HTA426), this protein is Glutamate-1-semialdehyde 2,1-aminomutase 2.